The primary structure comprises 237 residues: Oligoribonuclease, mitochondrial (237 aa).

The N-terminal 25 residues, Met1–Gly25, are a transit peptide targeting the mitochondrion. Positions Met43–Leu207 constitute an Exonuclease domain. Positions 47 and 49 each coordinate Mg(2+). Ser92 is modified (phosphoserine). A Phosphotyrosine modification is found at Tyr122. Asp147 is a Mg(2+) binding site. The residue at position 173 (Lys173) is an N6-acetyllysine. His194 is a catalytic residue. Asp199 contributes to the Mg(2+) binding site.

Belongs to the oligoribonuclease family. As to quaternary structure, homodimer. Homotetramer. It depends on Mn(2+) as a cofactor. The cofactor is Mg(2+).

It localises to the mitochondrion intermembrane space. The protein resides in the mitochondrion matrix. The protein localises to the mitochondrion. Its subcellular location is the cytoplasm. It is found in the nucleus. Functionally, 3'-to-5'exoribonuclease that preferentially degrades DNA and RNA oligonucleotides composed of only two nucleotides. Binds and degrades longer oligonucleotides with a lower affinity. Plays dual roles in mitochondria, scavenging nanoRNAs (small RNA oligonucleotides of &lt;5 nucleotides) that are produced by the degradosome and clearing short RNAs that are generated by RNA processing. Essential for correct initiation of mitochondrial transcription, degrading mitochondrial RNA dinucleotides to prevent RNA-primed transcription at non-canonical sites in the mitochondrial genome. Essential for embryonic development. In Bos taurus (Bovine), this protein is Oligoribonuclease, mitochondrial (REXO2).